Consider the following 278-residue polypeptide: Inositol oxygenase (278 aa).

Residues Arg22 and 78-80 (DES) contribute to the substrate site. 3 residues coordinate Fe cation: His91, His116, and Asp117. Residues Lys120 and 134 to 135 (GD) contribute to the substrate site. Fe cation contacts are provided by His187, His213, and Asp246. Substrate is bound at residue 213 to 214 (HS).

This sequence belongs to the myo-inositol oxygenase family. It depends on Fe cation as a cofactor.

The protein localises to the cytoplasm. The enzyme catalyses myo-inositol + O2 = D-glucuronate + H2O + H(+). Its pathway is polyol metabolism; myo-inositol degradation into D-glucuronate; D-glucuronate from myo-inositol: step 1/1. This Danio rerio (Zebrafish) protein is Inositol oxygenase (miox).